A 128-amino-acid chain; its full sequence is Sulfurtransferase TusD (128 aa).

Catalysis depends on cysteine 78, which acts as the Cysteine persulfide intermediate.

It belongs to the DsrE/TusD family. As to quaternary structure, heterohexamer, formed by a dimer of trimers. The hexameric TusBCD complex contains 2 copies each of TusB, TusC and TusD. The TusBCD complex interacts with TusE.

The protein localises to the cytoplasm. In terms of biological role, part of a sulfur-relay system required for 2-thiolation of 5-methylaminomethyl-2-thiouridine (mnm(5)s(2)U) at tRNA wobble positions. Accepts sulfur from TusA and transfers it in turn to TusE. The protein is Sulfurtransferase TusD of Salmonella dublin (strain CT_02021853).